A 276-amino-acid polypeptide reads, in one-letter code: Type II pantothenate kinase (276 aa).

Asp-8–Lys-15 serves as a coordination point for ATP. Catalysis depends on Glu-76, which acts as the Proton acceptor. ATP is bound by residues Thr-105, Gly-127–Met-131, Phe-143, and Ser-230.

It belongs to the type II pantothenate kinase family. Homodimer.

The protein resides in the cytoplasm. It catalyses the reaction (R)-pantothenate + ATP = (R)-4'-phosphopantothenate + ADP + H(+). It participates in cofactor biosynthesis; coenzyme A biosynthesis; CoA from (R)-pantothenate: step 1/5. In terms of biological role, catalyzes the phosphorylation of pantothenate (Pan), the first step in CoA biosynthesis. This is Type II pantothenate kinase from Bacillus anthracis.